Reading from the N-terminus, the 46-residue chain is Cysteine-rich venom protein asurin-1 (46 aa).

Belongs to the CRISP family. Contains 8 disulfide bonds. Expressed by the venom gland.

Its subcellular location is the secreted. Its function is as follows. Blocks contraction of smooth muscle elicited by high potassium-induced depolarization, but does not block caffeine-stimulated contraction. May target voltage-gated calcium channels on smooth muscle. In Austrelaps superbus (Lowland copperhead snake), this protein is Cysteine-rich venom protein asurin-1.